Here is a 477-residue protein sequence, read N- to C-terminus: Glycogen synthase (477 aa).

Lys-15 is an ADP-alpha-D-glucose binding site.

The protein belongs to the glycosyltransferase 1 family. Bacterial/plant glycogen synthase subfamily.

It carries out the reaction [(1-&gt;4)-alpha-D-glucosyl](n) + ADP-alpha-D-glucose = [(1-&gt;4)-alpha-D-glucosyl](n+1) + ADP + H(+). The protein operates within glycan biosynthesis; glycogen biosynthesis. Its function is as follows. Synthesizes alpha-1,4-glucan chains using ADP-glucose. The sequence is that of Glycogen synthase from Halorhodospira halophila (strain DSM 244 / SL1) (Ectothiorhodospira halophila (strain DSM 244 / SL1)).